The primary structure comprises 208 residues: Thymidylate kinase (208 aa).

10-17 (GPEGSGKT) contributes to the ATP binding site.

It belongs to the thymidylate kinase family.

The enzyme catalyses dTMP + ATP = dTDP + ADP. Its function is as follows. Phosphorylation of dTMP to form dTDP in both de novo and salvage pathways of dTTP synthesis. The polypeptide is Thymidylate kinase (Bacillus cereus (strain AH187)).